We begin with the raw amino-acid sequence, 162 residues long: Phosphopantetheine adenylyltransferase (162 aa).

Position 11 (Ser11) interacts with substrate. Residues 11–12 and His19 contribute to the ATP site; that span reads SF. Positions 43, 75, and 89 each coordinate substrate. ATP contacts are provided by residues 90–92, Glu100, and 125–131; these read GLR and YAFLSSS.

This sequence belongs to the bacterial CoaD family. In terms of assembly, homohexamer. Requires Mg(2+) as cofactor.

The protein localises to the cytoplasm. It catalyses the reaction (R)-4'-phosphopantetheine + ATP + H(+) = 3'-dephospho-CoA + diphosphate. It functions in the pathway cofactor biosynthesis; coenzyme A biosynthesis; CoA from (R)-pantothenate: step 4/5. Functionally, reversibly transfers an adenylyl group from ATP to 4'-phosphopantetheine, yielding dephospho-CoA (dPCoA) and pyrophosphate. The sequence is that of Phosphopantetheine adenylyltransferase from Finegoldia magna (strain ATCC 29328 / DSM 20472 / WAL 2508) (Peptostreptococcus magnus).